The sequence spans 185 residues: ATP synthase subunit b 2 (185 aa).

The disordered stretch occupies residues Met1 to Phe25. The chain crosses the membrane as a helical span at residues Ala34–Leu56.

It belongs to the ATPase B chain family. F-type ATPases have 2 components, F(1) - the catalytic core - and F(0) - the membrane proton channel. F(1) has five subunits: alpha(3), beta(3), gamma(1), delta(1), epsilon(1). F(0) has three main subunits: a(1), b(2) and c(10-14). The alpha and beta chains form an alternating ring which encloses part of the gamma chain. F(1) is attached to F(0) by a central stalk formed by the gamma and epsilon chains, while a peripheral stalk is formed by the delta and b chains.

The protein localises to the cell inner membrane. Functionally, f(1)F(0) ATP synthase produces ATP from ADP in the presence of a proton or sodium gradient. F-type ATPases consist of two structural domains, F(1) containing the extramembraneous catalytic core and F(0) containing the membrane proton channel, linked together by a central stalk and a peripheral stalk. During catalysis, ATP synthesis in the catalytic domain of F(1) is coupled via a rotary mechanism of the central stalk subunits to proton translocation. Its function is as follows. Component of the F(0) channel, it forms part of the peripheral stalk, linking F(1) to F(0). The b'-subunit is a diverged and duplicated form of b found in plants and photosynthetic bacteria. This Nitrobacter winogradskyi (strain ATCC 25391 / DSM 10237 / CIP 104748 / NCIMB 11846 / Nb-255) protein is ATP synthase subunit b 2 (atpF2).